The sequence spans 62 residues: Large ribosomal subunit protein bL28 (62 aa).

This sequence belongs to the bacterial ribosomal protein bL28 family.

This Staphylococcus epidermidis (strain ATCC 12228 / FDA PCI 1200) protein is Large ribosomal subunit protein bL28.